A 586-amino-acid chain; its full sequence is Transmembrane protease serine 13 (586 aa).

Disordered stretches follow at residues 1–115 (MERD…VTTS) and 131–157 (PIRS…LPKF). The Cytoplasmic segment spans residues 1–165 (MERDSHGNAS…KFTWREGQKQ (165 aa)). One copy of the 1-1 repeat lies at 9-13 (ASPAR). Residues 9 to 93 (ASPARTPSAG…ASPARASPAL (85 aa)) form a 13 X 5 AA repeats of A-S-P-A-[GLQR] region. One copy of the 2-1; approximate repeat lies at 14–18 (TPSAG). Positions 14-52 (TPSAGASPAQASPAGTPPGRASPAQASPAQASPAGTPPG) are enriched in low complexity. The segment at 14-68 (TPSAGASPAQASPAGTPPGRASPAQASPAQASPAGTPPGRASPAQASPAGTPPGR) is 4 X 5 AA repeats of T-P-P-G-R. Tandem repeats lie at residues 19 to 23 (ASPAQ), 24 to 28 (ASPAG), 29 to 33 (TPPGR), 34 to 38 (ASPAQ), 39 to 43 (ASPAQ), 44 to 48 (ASPAG), 49 to 53 (TPPGR), 54 to 58 (ASPAQ), 59 to 63 (ASPAG), and 64 to 68 (TPPGR). The stretch at 69–78 (ASPGRASPAQ) is one 1-9; approximate repeat. 2 stretches are compositionally biased toward low complexity: residues 69-111 (ASPG…RSAS) and 133-144 (RSSPARSAPATR). Repeat copies occupy residues 79–83 (ASPAQ), 84–88 (ASPAR), and 89–93 (ASPAL). A helical; Signal-anchor for type II membrane protein transmembrane segment spans residues 166–186 (LPLIGCVLLLIALVVSLIILF). The Extracellular segment spans residues 187 to 586 (QFWQGHTGIR…GGDPGGAPRL (400 aa)). The SRCR domain maps to 195-325 (IRYKEQRESC…HCGLRAMTGR (131 aa)). In terms of domain architecture, LDL-receptor class A spans 204–226 (CPKHAVRCDGVVDCKLKSDELGC). 3 disulfide bridges follow: C250–C314, C263–C317, and C351–C367. N255 and N292 each carry an N-linked (GlcNAc...) asparagine glycan. The 234-residue stretch at 326 to 559 (IVGGALASDS…VLPWIYSKME (234 aa)) folds into the Peptidase S1 domain. The active-site Charge relay system is H366. A glycan (N-linked (GlcNAc...) asparagine) is linked at N405. The active-site Charge relay system is the D414. N-linked (GlcNAc...) asparagine glycosylation is present at N445. Disulfide bonds link C448–C517, C480–C496, and C507–C535. Residue S511 is the Charge relay system of the active site. Polar residues predominate over residues 565 to 574 (QDTAPSRLGT). The disordered stretch occupies residues 565 to 586 (QDTAPSRLGTSSGGDPGGAPRL). Residues 575–586 (SSGGDPGGAPRL) are compositionally biased toward gly residues.

The protein belongs to the peptidase S1 family. Interacts with SPINT1/HAI-1; the interaction promotes the phosphorylation and cell membrane localization of TMPRSS13. Interacts with SPINT2/HAI-2; the interaction promotes the phosphorylation and cell membrane localization of TMPRSS13. In terms of processing, the inactive zymogen is post-translationally modified and then trafficked to the cell surface, whereby it undergoes autocatalytic cleavage resulting in an activated form that is released extracellularly. Phosphorylation is required for localization at the cell surface. Phosphorylation increases following inhibition of protease activity by SPINT2/HAI-2. Post-translationally, N-glycosylation of Asn-405 and Asn-445 is required for exit from the endoplasmic reticulum and trafficking to the cell surface. Also required for autocleavage of the zymogen, activation and secretion of the mature protein. As to expression, expressed in placenta. In terms of tissue distribution, predominantly expressed in lung, placenta, pancreas, and prostate. Expressed in lung, placenta, pancreas, and prostate. Weakly expressed in testis and peripheral blood lymphocytes.

It localises to the cell membrane. The protein localises to the secreted. Its subcellular location is the cytoplasm. Its activity is regulated as follows. Cleavage of HGF is inhibited by SPINT1/HAI-1 via the BPTI/Kunitz inhibitor 1 domain. Its function is as follows. Serine protease. Cleaves the proform of PRSS8/prostasin to form the active protein. Cleaves the proform of HGF to form the active protein which promotes MAPK signaling. Promotes the formation of the stratum corneum and subsequently the epidermal barrier in embryos. This Homo sapiens (Human) protein is Transmembrane protease serine 13 (TMPRSS13).